We begin with the raw amino-acid sequence, 315 residues long: Protein TIFY 4B (315 aa).

The segment at 113–145 (CHRRDSPRSAEFSGSSGQFVADKDSHKTVSVSP) is disordered. In terms of domain architecture, Tify spans 151 to 186 (TNAVVGQMTIFYSGKVNVYDGVPPEKARSIMHFAAN). The Jas signature appears at 233–260 (QANRKVSLQRYLEKRKDRRFSKTKKAPG). The Nuclear localization signal signature appears at 235–242 (NRKVSLQR). The span at 248 to 257 (KDRRFSKTKK) shows a compositional bias: basic residues. Positions 248–315 (KDRRFSKTKK…LNSDLNSEDN (68 aa)) are disordered. Residues 293 to 315 (PENQTKSPNISVDLNSDLNSEDN) are compositionally biased toward polar residues.

This sequence belongs to the TIFY/JAZ family. As to quaternary structure, interacts with AFPH2/NINJA.

The protein resides in the nucleus. In terms of biological role, regulates the arrest of dispersed meristematic cells during lamina development. This Arabidopsis thaliana (Mouse-ear cress) protein is Protein TIFY 4B (TIFY4B).